Here is a 193-residue protein sequence, read N- to C-terminus: Large ribosomal subunit protein eL18 (193 aa).

Residues 158–193 (HFGAAGVPGSHAKPFTSNRGKERQRSSARRRAFRHK) form a disordered region. Residues 183 to 193 (SSARRRAFRHK) show a composition bias toward basic residues.

This sequence belongs to the eukaryotic ribosomal protein eL18 family.

It localises to the cytoplasm. In Trypanosoma cruzi (strain CL Brener), this protein is Large ribosomal subunit protein eL18 (RPL18).